Here is a 142-residue protein sequence, read N- to C-terminus: Large ribosomal subunit protein uL11 (142 aa).

It belongs to the universal ribosomal protein uL11 family. In terms of assembly, part of the ribosomal stalk of the 50S ribosomal subunit. Interacts with L10 and the large rRNA to form the base of the stalk. L10 forms an elongated spine to which L12 dimers bind in a sequential fashion forming a multimeric L10(L12)X complex. One or more lysine residues are methylated.

In terms of biological role, forms part of the ribosomal stalk which helps the ribosome interact with GTP-bound translation factors. In Shewanella sp. (strain W3-18-1), this protein is Large ribosomal subunit protein uL11.